The chain runs to 282 residues: Transcription repressor MYB4 (282 aa).

HTH myb-type domains lie at 9 to 61 (KAHT…INYL) and 62 to 116 (RPDL…RRKL). DNA-binding regions (H-T-H motif) lie at residues 37–61 (WRSL…INYL) and 89–112 (WSLI…NTHI). The tract at residues 119 to 145 (RGIDPTSHRPIQESSASQDSKPTQLEP) is disordered. Positions 130 to 145 (QESSASQDSKPTQLEP) are enriched in polar residues.

In terms of assembly, interacts with BHLH12/MYC1 and BHLH42/TT8. Interacts with SAD2. As to expression, widely expressed at low level. Highly expressed in siliques. Weakly expressed in seedlings, young and mature leaves, cauline leaves, stems, flower buds and roots.

It is found in the nucleus. Transcription repressor involved in regulation of protection against UV. Mediates transcriptional repression of CYP73A5, the gene encoding trans-cinnamate 4-monooxygenase, thereby regulating the accumulation of the UV-protectant compound sinapoylmalate. This Arabidopsis thaliana (Mouse-ear cress) protein is Transcription repressor MYB4 (MYB4).